Consider the following 110-residue polypeptide: UPF0060 membrane protein Bcen_0802 (110 aa).

Helical transmembrane passes span 9 to 29 (ALFA…WLVL), 34 to 54 (PAWL…LLTL), 66 to 86 (YGGV…GVAL), and 88 to 108 (RWDV…ALQP).

The protein belongs to the UPF0060 family.

The protein localises to the cell inner membrane. The protein is UPF0060 membrane protein Bcen_0802 of Burkholderia orbicola (strain AU 1054).